A 394-amino-acid chain; its full sequence is MAAETFLFTSESVNEGHPDKLCDQVSDAVLDACLAQDADSKVACETCTKTNMVMVFGEITTKATVDYEKIVRDTCRNIGFISDDVGLDADRCKVLVNIEQQSPDIAQGVHGHFTKRPEDIGAGDQGIMFGYATDETPELMPLSHVLATKLGARLTEVRKNGTCAWLRPDGKTQVTVEYLNEGGAMVPVRVHTVLISTQHDETVTNDEIAADLKEHVIKPVIPEKYLDEKTIFHLNPSGRFVIGGPHGDAGLTGRKIIIDTYGGWGAHGGGAFSGKDPTKVDRSGAYIARQAAKSIIASGLARRCIVQISYAIGVPEPLSVFVDSYGTGKIPDKEILKIVKENFDFRPGMISINLDLKKGGNRFIKTAAYGHFGREDADFTWEVVKPLKFDKASA.

Mg(2+) is bound at residue E11. H17 contacts ATP. E45 contributes to the K(+) binding site. Residues E58 and Q101 each contribute to the L-methionine site. Residues 169–171, 237–240, D248, 254–255, A271, K275, and K279 contribute to the ATP site; these read DGK, SGRF, and RK. Position 248 (D248) interacts with L-methionine. An L-methionine-binding site is contributed by K279.

The protein belongs to the AdoMet synthase family. As to quaternary structure, homotetramer. The cofactor is Mn(2+). It depends on Mg(2+) as a cofactor. Co(2+) serves as cofactor. K(+) is required as a cofactor.

It localises to the cytoplasm. The catalysed reaction is L-methionine + ATP + H2O = S-adenosyl-L-methionine + phosphate + diphosphate. It functions in the pathway amino-acid biosynthesis; S-adenosyl-L-methionine biosynthesis; S-adenosyl-L-methionine from L-methionine: step 1/1. In terms of biological role, catalyzes the formation of S-adenosylmethionine from methionine and ATP. The reaction comprises two steps that are both catalyzed by the same enzyme: formation of S-adenosylmethionine (AdoMet) and triphosphate, and subsequent hydrolysis of the triphosphate. The chain is S-adenosylmethionine synthase 1 (SAMS1) from Triticum monococcum (Einkorn wheat).